The chain runs to 156 residues: MNINATLIGQSVAFLIFVLFCMKFVWPPVIAALHERQKKIADGLDAASRAARDLELAQEKAGQQLREAKAQAAEIIEQAKKRGNQIVEEAVEKARIDADRVKVQAQAEIEQELNSVKDKLRAQVGLLAVGGAEKILGATIDQNAHAELVNQLAAEI.

Residues V12–A32 form a helical membrane-spanning segment.

The protein belongs to the ATPase B chain family. As to quaternary structure, F-type ATPases have 2 components, F(1) - the catalytic core - and F(0) - the membrane proton channel. F(1) has five subunits: alpha(3), beta(3), gamma(1), delta(1), epsilon(1). F(0) has three main subunits: a(1), b(2) and c(10-14). The alpha and beta chains form an alternating ring which encloses part of the gamma chain. F(1) is attached to F(0) by a central stalk formed by the gamma and epsilon chains, while a peripheral stalk is formed by the delta and b chains.

It localises to the cell inner membrane. F(1)F(0) ATP synthase produces ATP from ADP in the presence of a proton or sodium gradient. F-type ATPases consist of two structural domains, F(1) containing the extramembraneous catalytic core and F(0) containing the membrane proton channel, linked together by a central stalk and a peripheral stalk. During catalysis, ATP synthesis in the catalytic domain of F(1) is coupled via a rotary mechanism of the central stalk subunits to proton translocation. Its function is as follows. Component of the F(0) channel, it forms part of the peripheral stalk, linking F(1) to F(0). This is ATP synthase subunit b from Pseudomonas fluorescens (strain Pf0-1).